The following is a 603-amino-acid chain: DNA mismatch repair protein MutL (603 aa).

The segment covering 337-347 has biased composition (basic and acidic residues); sequence ISKKQKEDQKS. Positions 337–383 are disordered; the sequence is ISKKQKEDQKSEQIQMSFEENKPVKETPTLFSKPTIPEYVPSDEDAP.

Belongs to the DNA mismatch repair MutL/HexB family.

Its function is as follows. This protein is involved in the repair of mismatches in DNA. It is required for dam-dependent methyl-directed DNA mismatch repair. May act as a 'molecular matchmaker', a protein that promotes the formation of a stable complex between two or more DNA-binding proteins in an ATP-dependent manner without itself being part of a final effector complex. This is DNA mismatch repair protein MutL from Listeria monocytogenes serotype 4b (strain F2365).